A 159-amino-acid chain; its full sequence is Ribosomal RNA large subunit methyltransferase H (159 aa).

S-adenosyl-L-methionine contacts are provided by residues L76, G108, and 127–132; that span reads FGLLTL.

It belongs to the RNA methyltransferase RlmH family. As to quaternary structure, homodimer.

It is found in the cytoplasm. It catalyses the reaction pseudouridine(1915) in 23S rRNA + S-adenosyl-L-methionine = N(3)-methylpseudouridine(1915) in 23S rRNA + S-adenosyl-L-homocysteine + H(+). In terms of biological role, specifically methylates the pseudouridine at position 1915 (m3Psi1915) in 23S rRNA. In Streptococcus equi subsp. zooepidemicus (strain H70), this protein is Ribosomal RNA large subunit methyltransferase H.